Here is a 173-residue protein sequence, read N- to C-terminus: MEYEALTGTLWDKGTFWVTVAVLIFLAFFGRKIVGAITTMLDQRSAAIQHELDEASRLRAEAEAMLKDAESRREAALAQAKDMLAMAGREAERLAADLLAEAEASARRREQMARERISAAEAAAIAEVRDAAAALAARAAEQILKETIDEAHDRGLIDQAIGGLPAALRQKAA.

A helical transmembrane segment spans residues 15-37 (TFWVTVAVLIFLAFFGRKIVGAI).

Belongs to the ATPase B chain family. As to quaternary structure, F-type ATPases have 2 components, F(1) - the catalytic core - and F(0) - the membrane proton channel. F(1) has five subunits: alpha(3), beta(3), gamma(1), delta(1), epsilon(1). F(0) has three main subunits: a(1), b(2) and c(10-14). The alpha and beta chains form an alternating ring which encloses part of the gamma chain. F(1) is attached to F(0) by a central stalk formed by the gamma and epsilon chains, while a peripheral stalk is formed by the delta and b chains.

The protein localises to the cell inner membrane. Functionally, f(1)F(0) ATP synthase produces ATP from ADP in the presence of a proton or sodium gradient. F-type ATPases consist of two structural domains, F(1) containing the extramembraneous catalytic core and F(0) containing the membrane proton channel, linked together by a central stalk and a peripheral stalk. During catalysis, ATP synthesis in the catalytic domain of F(1) is coupled via a rotary mechanism of the central stalk subunits to proton translocation. In terms of biological role, component of the F(0) channel, it forms part of the peripheral stalk, linking F(1) to F(0). This chain is ATP synthase subunit b 1, found in Acidiphilium cryptum (strain JF-5).